Here is a 189-residue protein sequence, read N- to C-terminus: Elongation factor P (189 aa).

It belongs to the elongation factor P family.

The protein localises to the cytoplasm. The protein operates within protein biosynthesis; polypeptide chain elongation. In terms of biological role, involved in peptide bond synthesis. Stimulates efficient translation and peptide-bond synthesis on native or reconstituted 70S ribosomes in vitro. Probably functions indirectly by altering the affinity of the ribosome for aminoacyl-tRNA, thus increasing their reactivity as acceptors for peptidyl transferase. The chain is Elongation factor P from Pseudomonas syringae pv. tomato (strain ATCC BAA-871 / DC3000).